We begin with the raw amino-acid sequence, 248 residues long: Triosephosphate isomerase (248 aa).

2 residues coordinate substrate: Asn-11 and Lys-13. The active-site Electrophile is the His-95. The active-site Proton acceptor is the Glu-165.

Belongs to the triosephosphate isomerase family. Homodimer.

Its subcellular location is the cytoplasm. It carries out the reaction dihydroxyacetone phosphate = methylglyoxal + phosphate. The enzyme catalyses D-glyceraldehyde 3-phosphate = dihydroxyacetone phosphate. It participates in carbohydrate degradation; glycolysis; D-glyceraldehyde 3-phosphate from glycerone phosphate: step 1/1. Its pathway is carbohydrate biosynthesis; gluconeogenesis. Functionally, triosephosphate isomerase is an extremely efficient metabolic enzyme that catalyzes the interconversion between dihydroxyacetone phosphate (DHAP) and D-glyceraldehyde-3-phosphate (G3P) in glycolysis and gluconeogenesis. Its function is as follows. It is also responsible for the non-negligible production of methylglyoxal a reactive cytotoxic side-product that modifies and can alter proteins, DNA and lipids. The chain is Triosephosphate isomerase (TPI1) from Gallus gallus (Chicken).